Consider the following 392-residue polypeptide: Putative purine permease 19 (392 aa).

A compositionally biased stretch (basic and acidic residues) spans 1-16 (MGFHTKSPDRVTHEEE). A disordered region spans residues 1–29 (MGFHTKSPDRVTHEEEANIGVDNQPRETT). S30 is modified (phosphoserine). Helical transmembrane passes span 46-66 (ICIF…TLLL), 88-108 (WLQS…LLLW), 128-148 (LFLL…LYAI), 154-174 (VFFL…TTII), 182-202 (WIIL…TSSG), 220-240 (WCAF…QLGF), 254-274 (VILM…VGLF), 300-320 (LIGL…LVCL), 325-345 (FSNV…VLAF), and 354-374 (FFKE…VYSL).

Belongs to the purine permeases (TC 2.A.7.14) family.

The protein resides in the membrane. The protein is Putative purine permease 19 (PUP19) of Arabidopsis thaliana (Mouse-ear cress).